The following is a 197-amino-acid chain: Recombination protein RecR (197 aa).

The C4-type zinc finger occupies 56-71; sequence CERCNTFTETEICQRC. A Toprim domain is found at 79–174; it reads SLLCVVEMPA…RVSRLSRGVP (96 aa).

This sequence belongs to the RecR family.

May play a role in DNA repair. It seems to be involved in an RecBC-independent recombinational process of DNA repair. It may act with RecF and RecO. The polypeptide is Recombination protein RecR (Aromatoleum aromaticum (strain DSM 19018 / LMG 30748 / EbN1) (Azoarcus sp. (strain EbN1))).